The chain runs to 336 residues: Protein DIA1 (336 aa).

Its subcellular location is the cytoplasm. Its function is as follows. Involved in regulation of invasive growth. The protein is Protein DIA1 (DIA1) of Saccharomyces cerevisiae (strain ATCC 204508 / S288c) (Baker's yeast).